The chain runs to 671 residues: MESIEQQLTELRTTLCHHEYLYHVMDAPEIPDAEYDRLMRELRELETKHPELITPDSPTQRVGAAPLAAFSQIRHEVPMLSLDNVFDEESFLAFNKRVQDRLKNNEKVTWCCELKLDGLAVSILYENGVLVSAATRGDGTTGEDITSNVRTIRAIPLKLHGENIPARLEVRGEVFLPQAGFEKINEDARRTGGKVFANPRNAAAGSLRQLDPRITAKRPLTFFCYGVGVLEGGELPDTHLGRLLQFKKWGVPVSDRVTLCESAEEVLAFYHKVEEDRPTLGFDIDGVVIKVNSLEQQEQLGFVARAPRWAVAFKFPAQEQMTFVRDVEFQVGRTGAITPVARLEPVHVAGVLVSNATLHNADEIERLGLRIGDKVVIRRAGDVIPQVVNVVLSERPEDTREVVFPTHCPVCGSDVERVEGEAVARCTGGLICGAQRKESLKHFVSRRAMDVDGMGDKIIDQLVEKEYVHTPADLFKLTAGKLTGLERMGPKLAQNVVNALEKAKETTFARFLYALGIREVGEATAAGLAAYFGTLEALEAASIEELQKVPDVGIVVASHVHNFFAEESNRNVISELLAEGVHWPAPIVINAEEIDSPFAGKTVVLTGSLSQMSRDDAKARLVELGAKVAGSVSKKTDLVIAGEAAGSKLAKAQELGIEVIDEAEMLRLLGS.

NAD(+) is bound by residues 32 to 36 (DAEYD), 81 to 82 (SL), and Glu-113. The active-site N6-AMP-lysine intermediate is the Lys-115. The NAD(+) site is built by Arg-136, Glu-173, Lys-290, and Lys-314. Residues Cys-408, Cys-411, Cys-426, and Cys-432 each contribute to the Zn(2+) site. The BRCT domain occupies 593–671 (EIDSPFAGKT…EAEMLRLLGS (79 aa)).

It belongs to the NAD-dependent DNA ligase family. LigA subfamily. Mg(2+) serves as cofactor. Requires Mn(2+) as cofactor.

The catalysed reaction is NAD(+) + (deoxyribonucleotide)n-3'-hydroxyl + 5'-phospho-(deoxyribonucleotide)m = (deoxyribonucleotide)n+m + AMP + beta-nicotinamide D-nucleotide.. Its function is as follows. DNA ligase that catalyzes the formation of phosphodiester linkages between 5'-phosphoryl and 3'-hydroxyl groups in double-stranded DNA using NAD as a coenzyme and as the energy source for the reaction. It is essential for DNA replication and repair of damaged DNA. In Shigella flexneri serotype 5b (strain 8401), this protein is DNA ligase.